The following is a 440-amino-acid chain: Histidinol dehydrogenase (440 aa).

The NAD(+) site is built by Tyr-139, Gln-200, and Asn-223. Residues Ser-246, Gln-268, and His-271 each coordinate substrate. Residues Gln-268 and His-271 each coordinate Zn(2+). Catalysis depends on proton acceptor residues Glu-336 and His-337. 4 residues coordinate substrate: His-337, Asp-370, Glu-424, and His-429. Asp-370 serves as a coordination point for Zn(2+). His-429 is a binding site for Zn(2+).

It belongs to the histidinol dehydrogenase family. Zn(2+) serves as cofactor.

It carries out the reaction L-histidinol + 2 NAD(+) + H2O = L-histidine + 2 NADH + 3 H(+). It functions in the pathway amino-acid biosynthesis; L-histidine biosynthesis; L-histidine from 5-phospho-alpha-D-ribose 1-diphosphate: step 9/9. Catalyzes the sequential NAD-dependent oxidations of L-histidinol to L-histidinaldehyde and then to L-histidine. This Bordetella bronchiseptica (strain ATCC BAA-588 / NCTC 13252 / RB50) (Alcaligenes bronchisepticus) protein is Histidinol dehydrogenase.